A 424-amino-acid polypeptide reads, in one-letter code: Serine--tRNA ligase (424 aa).

230–232 (TAE) lines the L-serine pocket. 261–263 (RAE) is an ATP binding site. Glutamate 284 is a binding site for L-serine. Residue 348–351 (EISS) coordinates ATP. Serine 384 provides a ligand contact to L-serine.

The protein belongs to the class-II aminoacyl-tRNA synthetase family. Type-1 seryl-tRNA synthetase subfamily. In terms of assembly, homodimer. The tRNA molecule binds across the dimer.

Its subcellular location is the cytoplasm. It carries out the reaction tRNA(Ser) + L-serine + ATP = L-seryl-tRNA(Ser) + AMP + diphosphate + H(+). The enzyme catalyses tRNA(Sec) + L-serine + ATP = L-seryl-tRNA(Sec) + AMP + diphosphate + H(+). It functions in the pathway aminoacyl-tRNA biosynthesis; selenocysteinyl-tRNA(Sec) biosynthesis; L-seryl-tRNA(Sec) from L-serine and tRNA(Sec): step 1/1. Functionally, catalyzes the attachment of serine to tRNA(Ser). Is also able to aminoacylate tRNA(Sec) with serine, to form the misacylated tRNA L-seryl-tRNA(Sec), which will be further converted into selenocysteinyl-tRNA(Sec). The sequence is that of Serine--tRNA ligase from Desulforamulus reducens (strain ATCC BAA-1160 / DSM 100696 / MI-1) (Desulfotomaculum reducens).